A 540-amino-acid chain; its full sequence is ATP-dependent RNA helicase DBP3 (540 aa).

Residues 1–35 are compositionally biased toward basic and acidic residues; that stretch reads MTVEESKKRKLTDDVAIKQNEKKIKKDKKVKDKKD. The disordered stretch occupies residues 1 to 89; that stretch reads MTVEESKKRK…TTEQPSKQVK (89 aa). A compositionally biased stretch (basic residues) spans 36-52; it reads KKDKKDKKDKKEKKEKK. Basic and acidic residues-rich tracts occupy residues 53–62 and 68–79; these read EKKEKNDKKD and DKKAEQVDKLSE. The short motif at 130–156 is the Q motif element; it reads LAFNQISLDKEVQNEIAKFPKPTPIQA. The 174-residue stretch at 159-332 folds into the Helicase ATP-binding domain; the sequence is WPYLLSGKDV…STFMKEPVKV (174 aa). Position 172-179 (172-179) interacts with ATP; the sequence is AETGSGKT. Positions 279 to 282 match the DEAD box motif; that stretch reads DEAD. Positions 361 to 510 constitute a Helicase C-terminal domain; that stretch reads KLLDLLKKYQ…PVPEDLIKFG (150 aa).

This sequence belongs to the DEAD box helicase family. DDX5/DBP2 subfamily.

It is found in the nucleus. It localises to the nucleolus. It catalyses the reaction ATP + H2O = ADP + phosphate + H(+). ATP-dependent RNA helicase required for 60S ribosomal subunit synthesis. Involved in efficient pre-rRNA processing, predominantly at site A3, which is necessary for the normal formation of 25S and 5.8S rRNAs. This is ATP-dependent RNA helicase DBP3 (DBP3) from Candida glabrata (strain ATCC 2001 / BCRC 20586 / JCM 3761 / NBRC 0622 / NRRL Y-65 / CBS 138) (Yeast).